Here is a 505-residue protein sequence, read N- to C-terminus: AMP phosphorylase (505 aa).

AMP-binding positions include Gly-170, 196 to 201 (SRAITS), and Thr-205. Asp-258 acts as the Proton donor in catalysis. Positions 266 and 290 each coordinate AMP.

This sequence belongs to the thymidine/pyrimidine-nucleoside phosphorylase family. Type 2 subfamily.

It catalyses the reaction AMP + phosphate = alpha-D-ribose 1,5-bisphosphate + adenine. The enzyme catalyses CMP + phosphate = cytosine + alpha-D-ribose 1,5-bisphosphate. The catalysed reaction is UMP + phosphate = alpha-D-ribose 1,5-bisphosphate + uracil. Functionally, catalyzes the conversion of AMP and phosphate to adenine and ribose 1,5-bisphosphate (R15P). Exhibits phosphorylase activity toward CMP and UMP in addition to AMP. Functions in an archaeal AMP degradation pathway, together with R15P isomerase and RubisCO. The chain is AMP phosphorylase from Methanococcus vannielii (strain ATCC 35089 / DSM 1224 / JCM 13029 / OCM 148 / SB).